Here is a 197-residue protein sequence, read N- to C-terminus: Imidazoleglycerol-phosphate dehydratase (197 aa).

This sequence belongs to the imidazoleglycerol-phosphate dehydratase family.

Its subcellular location is the cytoplasm. The catalysed reaction is D-erythro-1-(imidazol-4-yl)glycerol 3-phosphate = 3-(imidazol-4-yl)-2-oxopropyl phosphate + H2O. The protein operates within amino-acid biosynthesis; L-histidine biosynthesis; L-histidine from 5-phospho-alpha-D-ribose 1-diphosphate: step 6/9. In Pseudomonas fluorescens (strain SBW25), this protein is Imidazoleglycerol-phosphate dehydratase.